A 213-amino-acid polypeptide reads, in one-letter code: Uracil phosphoribosyltransferase (213 aa).

Residues Arg-78, Arg-103, and 131-139 (DPMLATGGT) each bind 5-phospho-alpha-D-ribose 1-diphosphate. Uracil-binding positions include Ile-197 and 202–204 (GDA). A 5-phospho-alpha-D-ribose 1-diphosphate-binding site is contributed by Asp-203.

It belongs to the UPRTase family. The cofactor is Mg(2+).

It carries out the reaction UMP + diphosphate = 5-phospho-alpha-D-ribose 1-diphosphate + uracil. Its pathway is pyrimidine metabolism; UMP biosynthesis via salvage pathway; UMP from uracil: step 1/1. With respect to regulation, allosterically activated by GTP. In terms of biological role, catalyzes the conversion of uracil and 5-phospho-alpha-D-ribose 1-diphosphate (PRPP) to UMP and diphosphate. In Bifidobacterium adolescentis (strain ATCC 15703 / DSM 20083 / NCTC 11814 / E194a), this protein is Uracil phosphoribosyltransferase.